A 430-amino-acid polypeptide reads, in one-letter code: Adenylosuccinate synthetase (430 aa).

Residues 12–18 (GDEGKGK) and 40–42 (GHT) each bind GTP. Asp13 (proton acceptor) is an active-site residue. Residues Asp13 and Gly40 each contribute to the Mg(2+) site. IMP is bound by residues 13 to 16 (DEGK), 38 to 41 (NAGH), Thr130, Arg144, Gln224, Thr239, and Arg303. His41 serves as the catalytic Proton donor. Residue 299-305 (VVTGRKR) participates in substrate binding. GTP contacts are provided by residues Arg305, 331–333 (KLD), and 413–415 (STS).

It belongs to the adenylosuccinate synthetase family. In terms of assembly, homodimer. It depends on Mg(2+) as a cofactor.

It localises to the cytoplasm. It catalyses the reaction IMP + L-aspartate + GTP = N(6)-(1,2-dicarboxyethyl)-AMP + GDP + phosphate + 2 H(+). It participates in purine metabolism; AMP biosynthesis via de novo pathway; AMP from IMP: step 1/2. Functionally, plays an important role in the de novo pathway of purine nucleotide biosynthesis. Catalyzes the first committed step in the biosynthesis of AMP from IMP. This is Adenylosuccinate synthetase from Methylobacterium nodulans (strain LMG 21967 / CNCM I-2342 / ORS 2060).